The chain runs to 270 residues: Co-chaperone protein DjlA (270 aa).

The Periplasmic portion of the chain corresponds to 1-6 (MNWIGK). A helical transmembrane segment spans residues 7–30 (LIGMMLGFILAGPIGLIIGLFIGH). The Cytoplasmic segment spans residues 31–270 (VVFDQGRFRQ…EQIRKVRSMV (240 aa)). In terms of domain architecture, J spans 204-270 (DAYKVLGLTS…EQIRKVRSMV (67 aa)).

Homodimer.

Its subcellular location is the cell inner membrane. Functionally, regulatory DnaK co-chaperone. Direct interaction between DnaK and DjlA is needed for the induction of the wcaABCDE operon, involved in the synthesis of a colanic acid polysaccharide capsule, possibly through activation of the RcsB/RcsC phosphotransfer signaling pathway. The colanic acid capsule may help the bacterium survive conditions outside the host. The chain is Co-chaperone protein DjlA from Coxiella burnetii (strain RSA 493 / Nine Mile phase I).